The primary structure comprises 320 residues: Aminoacyl tRNA synthase complex-interacting multifunctional protein 2 (320 aa).

S36 carries the post-translational modification Phosphoserine. Positions 82–162 (TPDADLDVTN…HTHSSVKNVP (81 aa)) are interaction with PRKN. Residues 162 to 225 (PENLVKCFGE…FLFSLFGQKH (64 aa)) form an interaction with TP53 region. The GST C-terminal domain occupies 220 to 317 (LFGQKHNAVT…NLAPFSTALQ (98 aa)).

As to quaternary structure, part of the multisynthetase complex (MSC), a multisubunit complex that groups tRNA ligases for Arg (RARS1), Asp (DARS1), Gln (QARS1), Ile (IARS1), Leu (LARS1), Lys (KARS1), Met (MARS1) the bifunctional ligase for Glu and Pro (EPRS1) and the auxiliary subunits AIMP1/p43, AIMP2/p38 and EEF1E1/p18. Interacts (via N-terminus) with KARS1. Interacts with EPRS1. Forms a linear complex that contains MARS1, EEF1E1, EPRS1 and AIMP2 that is at the core of the multisubunit complex. Binds FUBP1 (via C-terminus). Interacts in both its unphosphorylated and phosphorylated forms with p53/TP53 (via N-terminus) in the nucleus following UV irradiation. Interacts (via N-terminus) with PRKN/parkin (via first RING-type domain). Interacts with TARS3. Phosphorylated on serine residues in response to UV irradiation. Post-translationally, ubiquitinated by PRKN, leading to its degradation by the proteasome.

The protein localises to the cytoplasm. The protein resides in the cytosol. It is found in the nucleus. In terms of biological role, required for assembly and stability of the aminoacyl-tRNA synthase complex. Mediates ubiquitination and degradation of FUBP1, a transcriptional activator of MYC, leading to MYC down-regulation which is required for aveolar type II cell differentiation. Blocks MDM2-mediated ubiquitination and degradation of p53/TP53. Functions as a proapoptotic factor. In Mus musculus (Mouse), this protein is Aminoacyl tRNA synthase complex-interacting multifunctional protein 2 (Aimp2).